The following is a 1172-amino-acid chain: NACHT, LRR and PYD domains-containing protein 1b allele 3 (1172 aa).

The interval 1-22 is disordered; that stretch reads MEESPPKQKSNTKVAQHEGQQD. The NACHT domain maps to 126–435; the sequence is QLVIIEGAAG…EFFAAISCIL (310 aa). 132 to 139 lines the ATP pocket; sequence GAAGIGKS. LRR repeat units lie at residues 627–647 and 684–704; these read NLEG…QSLC and SLTE…RMLC. The interval 789-922 is ZU5; sequence FWGPTGPVAT…GYTVLKNPSF (134 aa). Positions 789–1072 constitute an FIIND domain; the sequence is FWGPTGPVAT…LRPALPRIAQ (284 aa). A UPA region spans residues 923 to 1072; the sequence is SPMGDVLRII…LRPALPRIAQ (150 aa). One can recognise a CARD domain in the interval 1082–1165; that stretch reads HFMDQHREQL…HLVMDLLEKS (84 aa).

The protein belongs to the NLRP family. In terms of processing, in contrast to allele 1 and 2, not able to mediate autocatalytic cleavage. Expressed in macrophages.

The protein resides in the cytoplasm. The protein localises to the cytosol. With respect to regulation, in contrast to allele 1, does not undergo autocatalytic cleavage within the FIIND domain and its mode of activation remains unclear. In contrast to alleles 1 and 2, allele 3 is not activated by Val-boroPro (Talabostat, PT-100). Not activated by cleavage by B.anthracis lethal toxin (LT) endopeptidase. Not activated by metabolic inhibitors, such as 2-deoxy-D-glucose and sodium azide. Its function is as follows. May act as the sensor component of the Nlrp1b inflammasome, which mediates inflammasome activation in response to various pathogen-associated signals, leading to subsequent pyroptosis. Inflammasomes are supramolecular complexes that assemble in the cytosol in response to pathogens and other damage-associated signals and play critical roles in innate immunity and inflammation. May act as a recognition receptor (PRR), which recognizes specific pathogens and other damage-associated signals and forms an inflammasome complex: the inflammasome directly recruits pro-caspase-1 (proCASP1) independently of PYCARD/ASC and promotes caspase-1 (CASP1) activation, which subsequently cleaves and activates inflammatory cytokines IL1B and IL18 and gasdermin-D (GSDMD), leading to pyroptosis. In the absence of GSDMD expression, the Nlrp1b inflammasome is able to recruit and activate CASP8, leading to activation of gasdermin-E (GSDME). Contrary to Nlrp1b allele 1, allele 3 is not activated by Bacillus anthracis lethal toxin. The absence of autocatalytic cleavage within the FIIND domain, which regulates activation in other alleles, suggests that allele 3 may be non-functional. The sequence is that of NACHT, LRR and PYD domains-containing protein 1b allele 3 from Mus musculus (Mouse).